Here is a 389-residue protein sequence, read N- to C-terminus: MYKTKGGFQLTLQTLSLVVGFMAWSIIAPLMPFIKQDVNVTEGQISIILAIPVILGSVLRVPFGYLTNIVGAKWVFFTSFIVLLFPIFFLSQAQTPGMLMASGFFLGVGGAIFSVGVTSVPKYFPKEKVGLANGIYGMGNIGTAVSSFLAPPIAGIIGWQTTVRSYLIIIALFALIMFIFGDTQERKIKVPLMAQMKTLSKNYKLYYLSYWYFITFGAFVAFGIFLPNYLVNHFGIDKVDAGIRSGVFIALATFLRPIGGILGDKFNAVKVLMIDFVIMIIGAVILGISDHIALFTVGCLTISICAGIGNGLIFKLVPSYFSNEAGSANGIVSMMGGLGGFFPPLVITYVANLTGSSHLAFIFLAVFGCIALFTMRHLYQKEYGSLKHS.

12 helical membrane passes run 14 to 34, 45 to 65, 69 to 89, 97 to 117, 139 to 159, 161 to 181, 211 to 231, 246 to 266, 268 to 288, 294 to 314, 331 to 351, and 353 to 373; these read TLSL…MPFI, ISII…PFGY, IVGA…PIFF, GMLM…SVGV, GNIG…IIGW, TTVR…FIFG, WYFI…NYLV, GVFI…GDKF, AVKV…ILGI, LFTV…GLIF, IVSM…TYVA, and LTGS…IALF.

The protein belongs to the major facilitator superfamily. Nitrate/nitrite porter (TC 2.A.1.8) family.

It localises to the cell membrane. In terms of biological role, probably required for nitrate uptake under anoxic conditions. Also possibly involved in excretion of nitrite produced by the dissimilatory reduction of nitrate. This Staphylococcus aureus (strain JH9) protein is Probable nitrate transporter NarT (narT).